Consider the following 418-residue polypeptide: D-amino acid dehydrogenase 1 (418 aa).

3 to 17 (IMVLGGGVIGVTTAY) is an FAD binding site.

The protein belongs to the DadA oxidoreductase family. It depends on FAD as a cofactor.

It catalyses the reaction a D-alpha-amino acid + A + H2O = a 2-oxocarboxylate + AH2 + NH4(+). It participates in amino-acid degradation; D-alanine degradation; NH(3) and pyruvate from D-alanine: step 1/1. Its function is as follows. Oxidative deamination of D-amino acids. This is D-amino acid dehydrogenase 1 (dadA1) from Mesorhizobium japonicum (strain LMG 29417 / CECT 9101 / MAFF 303099) (Mesorhizobium loti (strain MAFF 303099)).